A 409-amino-acid chain; its full sequence is Endoglucanase B (409 aa).

Substrate contacts are provided by residues His61, 65 to 66, Tyr92, and His127; that span reads WY. Glu165 acts as the Proton donor in catalysis. Tyr228 contributes to the substrate binding site. The active-site Nucleophile is Glu254. Substrate is bound by residues 260–261, Trp288, and 293–295; these read AT and KDE. The disordered stretch occupies residues 326–372; that stretch reads IRESATTPPSDPTPPSDPDPGEPEPDPGEPDPTPPSDPGDYPAWDPN. Residues 334-343 are compositionally biased toward pro residues; sequence PSDPTPPSDP. Acidic residues predominate over residues 344 to 354; the sequence is DPGEPEPDPGE.

It belongs to the glycosyl hydrolase 5 (cellulase A) family.

The enzyme catalyses Endohydrolysis of (1-&gt;4)-beta-D-glucosidic linkages in cellulose, lichenin and cereal beta-D-glucans.. The protein is Endoglucanase B (celB) of Evansella cellulosilytica (strain ATCC 21833 / DSM 2522 / FERM P-1141 / JCM 9156 / N-4) (Bacillus cellulosilyticus).